The chain runs to 449 residues: MERRARRPRGRFYAFRRGRWNHLKRLRRRYKFRHRRRQRYRRRAFRKAFHNPRPGTYSVRLPNPQSTMTIRFQGVIFLTEGLILPKNSTAGGYADHMYGARVAKISVNLKEFLLASMNLTYVSKLGGPIAGELIADGSKSEAAENWPNCCVPLDNNVPSATPSAWWRWALMMMQPTDSCRFFNHPKQMTLQDMGRMFGGWHLFRHIETRFQLLATKNEGSFSPVASLLSQGEYLTRRDDVKYSSDHQNRWRKGGQPMTGGIAYATGKMRPDEQQYPAMPPDPPIITSTTAQGTQVRCMNSTQAWWSWDTYMSFATLTALGAQWSFPPGQRSVSRRSFNHHKARGAGDPKGQRWHTLVPLGTETITDSYMGAPASELDTNFFTLYVAQGTNKSQQYKFGTATYALKEPVMKSDSWAVVRVQSVWQLGNRQRPYPWDVNWANSTMYWGTQP.

The interval 1–43 (MERRARRPRGRFYAFRRGRWNHLKRLRRRYKFRHRRRQRYRRR) is DNA-binding. Positions 6–47 (RRPRGRFYAFRRGRWNHLKRLRRRYKFRHRRRQRYRRRAFRK) are nuclear localization signals.

Belongs to the gyrovirus capsid protein family. Homomultimer (Potential). Interacts with Rep; this interaction relocates Rep into the nucleus.

The protein resides in the host nucleus. Its subcellular location is the virion. Self-assembles to form the virion icosahedral capsid with a T=1 symmetry. This very small capsid (25 nm in diameter) allows the virus to be very stable in the environment and resistant to some disinfectants, including detergents. Essential for the initial attachment to host receptors. After attachment, the virus is endocytosed and traffics to the nucleus. The capsid protein binds and transports the viral genome and Rep across the nuclear envelope. This Chicken anemia virus (isolate Japan 82-2) (CAV) protein is Capsid protein (VP1).